Here is a 209-residue protein sequence, read N- to C-terminus: Small ribosomal subunit protein uS4 (209 aa).

In terms of domain architecture, S4 RNA-binding spans S98–A164.

Belongs to the universal ribosomal protein uS4 family. In terms of assembly, part of the 30S ribosomal subunit. Contacts protein S5. The interaction surface between S4 and S5 is involved in control of translational fidelity.

Functionally, one of the primary rRNA binding proteins, it binds directly to 16S rRNA where it nucleates assembly of the body of the 30S subunit. With S5 and S12 plays an important role in translational accuracy. In Frankia alni (strain DSM 45986 / CECT 9034 / ACN14a), this protein is Small ribosomal subunit protein uS4.